We begin with the raw amino-acid sequence, 1072 residues long: DNA-directed RNA polymerase subunit beta (1072 aa).

It belongs to the RNA polymerase beta chain family. In plastids the minimal PEP RNA polymerase catalytic core is composed of four subunits: alpha, beta, beta', and beta''. When a (nuclear-encoded) sigma factor is associated with the core the holoenzyme is formed, which can initiate transcription.

The protein resides in the plastid. It is found in the chloroplast. It catalyses the reaction RNA(n) + a ribonucleoside 5'-triphosphate = RNA(n+1) + diphosphate. DNA-dependent RNA polymerase catalyzes the transcription of DNA into RNA using the four ribonucleoside triphosphates as substrates. This chain is DNA-directed RNA polymerase subunit beta, found in Capsella bursa-pastoris (Shepherd's purse).